Reading from the N-terminus, the 233-residue chain is Large ribosomal subunit protein uL1 (233 aa).

The protein belongs to the universal ribosomal protein uL1 family. As to quaternary structure, part of the 50S ribosomal subunit.

Functionally, binds directly to 23S rRNA. The L1 stalk is quite mobile in the ribosome, and is involved in E site tRNA release. Protein L1 is also a translational repressor protein, it controls the translation of the L11 operon by binding to its mRNA. The protein is Large ribosomal subunit protein uL1 of Campylobacter concisus (strain 13826).